We begin with the raw amino-acid sequence, 199 residues long: Single-stranded DNA cytosine deaminase (199 aa).

The Bipartite nuclear localization signal signature appears at 1–30 (MDSLLKKQRQFLYQFKNVRWAKGRHETYLC). The segment at 2–26 (DSLLKKQRQFLYQFKNVRWAKGRHE) is interaction with SUPT6H. The 108-residue stretch at 23–130 (GRHETYLCYV…KAEPEGLRRL (108 aa)) folds into the CMP/dCMP-type deaminase domain. Residue Thr27 is modified to Phosphothreonine; by PKA. Ser38 bears the Phosphoserine; by PKA mark. The segment at 39–42 (PTSF) is important for interaction with CTNNBL1. Position 56 (His56) interacts with Zn(2+). Glu58 serves as the catalytic Proton donor. Positions 87 and 90 each coordinate Zn(2+). The required for interaction with RNF126 stretch occupies residues 88–116 (YDCARHVADFLRGYPNLSLRIFTARLYFC). The short motif at 184-199 (LYEVDDLRDAFRTLGL) is the Nuclear export signal element.

This sequence belongs to the cytidine and deoxycytidylate deaminase family. As to quaternary structure, interacts with CTNNBL1; the interaction is important for the immunoglobulin switch activity of AICDA. Interacts (via its NLS) with KPNA1. Interacts with PKA/PRKACA and PRKAR1A/PKR1. Interacts with SUPT6H, TRIM28 and NCL. Directly interacts with MCM3AP; this interaction may favor AICDA recruitment to immunoglobulin variable region genes, hence promoting somatic hypermutations. Requires Zn(2+) as cofactor. Post-translationally, ser-38 is the major site whereas Thr-27 is the minor site of phosphorylation. Phosphorylation regulates its class-switch recombination activity. In terms of processing, probably monoubiquitinated on several residues by RNF126. In terms of tissue distribution, expressed in lymph nodes, spleen and thymus.

It is found in the nucleus. It localises to the cytoplasm. It carries out the reaction a 2'-deoxycytidine in single-stranded DNA + H2O + H(+) = a 2'-deoxyuridine in single-stranded DNA + NH4(+). Functionally, single-stranded DNA-specific cytidine deaminase. Involved in somatic hypermutation (SHM), gene conversion, and class-switch recombination (CSR) in B-lymphocytes by deaminating C to U during transcription of Ig-variable (V) and Ig-switch (S) region DNA. Required for several crucial steps of B-cell terminal differentiation necessary for efficient antibody responses. May also play a role in the epigenetic regulation of gene expression by participating in DNA demethylation. The chain is Single-stranded DNA cytosine deaminase (AICDA) from Bos taurus (Bovine).